The primary structure comprises 260 residues: 5-oxoprolinase subunit A (260 aa).

This sequence belongs to the LamB/PxpA family. As to quaternary structure, forms a complex composed of PxpA, PxpB and PxpC.

It carries out the reaction 5-oxo-L-proline + ATP + 2 H2O = L-glutamate + ADP + phosphate + H(+). Its function is as follows. Catalyzes the cleavage of 5-oxoproline to form L-glutamate coupled to the hydrolysis of ATP to ADP and inorganic phosphate. The polypeptide is 5-oxoprolinase subunit A (Methylococcus capsulatus (strain ATCC 33009 / NCIMB 11132 / Bath)).